The chain runs to 549 residues: Probable protein kinase UbiB (549 aa).

A Protein kinase domain is found at 123 to 501; the sequence is DFDETPLASA…QQQAHKSNYM (379 aa). ATP contacts are provided by residues 129 to 137 and lysine 152; that span reads LASASISQV. The active-site Proton acceptor is the aspartate 287. 2 consecutive transmembrane segments (helical) span residues 499 to 516 and 521 to 540; these read NYML…TLLF and TLWS…FIGW.

Belongs to the ABC1 family. UbiB subfamily.

The protein localises to the cell inner membrane. The protein operates within cofactor biosynthesis; ubiquinone biosynthesis [regulation]. Functionally, is probably a protein kinase regulator of UbiI activity which is involved in aerobic coenzyme Q (ubiquinone) biosynthesis. This is Probable protein kinase UbiB from Shewanella sp. (strain W3-18-1).